Consider the following 154-residue polypeptide: Transcriptional repressor NrdR (154 aa).

The segment at 3-34 (CPFCRHPDSRVVDSRETDEGQAIRRRRSCPEC) is a zinc-finger region. The 91-residue stretch at 46–136 (LAVVKRSGVT…VYRSFSSAED (91 aa)) folds into the ATP-cone domain.

This sequence belongs to the NrdR family. Zn(2+) serves as cofactor.

Its function is as follows. Negatively regulates transcription of bacterial ribonucleotide reductase nrd genes and operons by binding to NrdR-boxes. This chain is Transcriptional repressor NrdR, found in Mycolicibacterium vanbaalenii (strain DSM 7251 / JCM 13017 / BCRC 16820 / KCTC 9966 / NRRL B-24157 / PYR-1) (Mycobacterium vanbaalenii).